The sequence spans 926 residues: Serine/threonine-protein kinase SIK2 (926 aa).

The region spanning 20-271 (YDIEGTLGKG…IAQIKEHKWM (252 aa)) is the Protein kinase domain. Thr-25 bears the Phosphothreonine mark. ATP contacts are provided by residues 26–34 (LGKGNFAVV) and Lys-49. N6-acetyllysine; by EP300 is present on Lys-53. Asp-142 serves as the catalytic Proton acceptor. Residue Thr-175 is modified to Phosphothreonine; by LKB1. One can recognise a UBA domain in the interval 295–335 (EFNEQVLRLMHSLGIDQQKTIESLQNKSYNHFAAIYFLLVE). At Thr-484 the chain carries Phosphothreonine. Ser-534 and Ser-587 each carry phosphoserine. 2 stretches are compositionally biased toward low complexity: residues 644–659 (SSCP…ESVS) and 742–756 (SSYP…LPRQ). Disordered stretches follow at residues 644 to 666 (SSCP…ASVH), 742 to 776 (SSYP…PLSP), and 801 to 896 (PLPS…SSYD). Residues 765-774 (APPFSLTQPL) are compositionally biased toward polar residues. Residues 822–834 (QPPPPPPPPPPRQ) are compositionally biased toward pro residues.

It belongs to the protein kinase superfamily. CAMK Ser/Thr protein kinase family. SNF1 subfamily. Interacts with and phosphorylates TORC2/CRTC2. Requires Mg(2+) as cofactor. In terms of processing, phosphorylated at Thr-175 by STK11/LKB1 in complex with STE20-related adapter-alpha (STRADA) pseudo kinase and CAB39. Phosphorylated at Thr-484 in response to insulin in adipocytes. Acetylation at Lys-53 inhibits kinase activity. Deacetylated by HDAC6.

It is found in the cytoplasm. It localises to the endoplasmic reticulum membrane. The enzyme catalyses L-seryl-[protein] + ATP = O-phospho-L-seryl-[protein] + ADP + H(+). It carries out the reaction L-threonyl-[protein] + ATP = O-phospho-L-threonyl-[protein] + ADP + H(+). With respect to regulation, activated by phosphorylation on Thr-175. In terms of biological role, serine/threonine-protein kinase that plays a role in many biological processes such as fatty acid oxidation, autophagy, immune response or glucose metabolism. Phosphorylates 'Ser-794' of IRS1 in insulin-stimulated adipocytes, potentially modulating the efficiency of insulin signal transduction. Inhibits CREB activity by phosphorylating and repressing TORCs, the CREB-specific coactivators. Phosphorylates EP300 and thus inhibits its histone acetyltransferase activity. In turn, regulates the DNA-binding ability of several transcription factors such as PPARA or MLXIPL. Also plays a role in thymic T-cell development. The protein is Serine/threonine-protein kinase SIK2 (SIK2) of Homo sapiens (Human).